The primary structure comprises 106 residues: Circadian clock oscillator protein KaiB (106 aa).

The protein belongs to the KaiB family. The KaiABC complex composition changes during the circadian cycle to control KaiC phosphorylation. Complexes KaiC(6), KaiA(2-4):KaiC(6), KaiB(6):KaiC(6) and KaiC(6):KaiB(6):KaiA(12) are among the most important forms, many form cooperatively. Undergoes a major conformational rearrangment; in the free state forms homotetramers as a dimer of dimers. When bound to the CI domain of KaiC switches to a monomeric thioredoxin-fold (KaiB(fs)). KaiB(fs) binds CikA, leading it to dephosphorylate phospho-RpaA.

Key component of the KaiABC oscillator complex, which constitutes the main circadian regulator in cyanobacteria. Complex composition changes during the circadian cycle to control KaiC phosphorylation. KaiA stimulates KaiC autophosphorylation, while KaiB sequesters KaiA, leading to KaiC autodephosphorylation. Phospho-Ser-431 KaiC accumulation triggers binding of KaiB to form the KaiB(6):KaiC(6) complex, leading to changes in output regulators CikA and SasA. KaiB switches to a thioredoxin-like fold (KaiB(fs)) when bound to KaiC. KaiB(6):KaiC(6) formation exposes a site for KaiA binding that sequesters KaiA from KaiC, making the KaiC(6):KaiB(6):KaiA(12) complex that results in KaiC autodephosphorylation. Its function is as follows. A metamorphic protein which reversibly switches between an inactive tetrameric fold and a rare, thioredoxin-like monomeric fold (KaiB(fs)). KaiB(fs) binds phospho-KaiC, KaiA and CikA. KaiA and CikA compete for binding to KaiB(fs), and KaiB(fs) and SasA compete for binding to KaiC, thus the clock oscillator and output signal pathway are tightly coupled. This Gloeothece citriformis (strain PCC 7424) (Cyanothece sp. (strain PCC 7424)) protein is Circadian clock oscillator protein KaiB.